Here is a 206-residue protein sequence, read N- to C-terminus: Small ribosomal subunit protein uS4 (206 aa).

Positions 96 to 168 constitute an S4 RNA-binding domain; it reads SRLDNVVYRM…LELAEQREKP (73 aa).

Belongs to the universal ribosomal protein uS4 family. Part of the 30S ribosomal subunit. Contacts protein S5. The interaction surface between S4 and S5 is involved in control of translational fidelity.

One of the primary rRNA binding proteins, it binds directly to 16S rRNA where it nucleates assembly of the body of the 30S subunit. In terms of biological role, with S5 and S12 plays an important role in translational accuracy. In Baumannia cicadellinicola subsp. Homalodisca coagulata, this protein is Small ribosomal subunit protein uS4.